Here is a 248-residue protein sequence, read N- to C-terminus: Probable transcriptional regulatory protein OCAR_7305/OCA5_c08120 (248 aa).

Belongs to the TACO1 family.

Its subcellular location is the cytoplasm. In Afipia carboxidovorans (strain ATCC 49405 / DSM 1227 / KCTC 32145 / OM5) (Oligotropha carboxidovorans), this protein is Probable transcriptional regulatory protein OCAR_7305/OCA5_c08120.